The following is a 148-amino-acid chain: uncharacterized protein (148 aa).

The region spanning 4–65 (MDKVDLQLIK…IPNLEKLNYM (62 aa)) is the HTH asnC-type domain. Residues 23–42 (YRELAEMLGTTRQRVARKVD) constitute a DNA-binding region (H-T-H motif).

This is an uncharacterized protein from Pyrococcus furiosus (strain ATCC 43587 / DSM 3638 / JCM 8422 / Vc1).